A 156-amino-acid polypeptide reads, in one-letter code: Small ribosomal subunit protein uS7 (156 aa).

The protein belongs to the universal ribosomal protein uS7 family. As to quaternary structure, part of the 30S ribosomal subunit. Contacts proteins S9 and S11.

Its function is as follows. One of the primary rRNA binding proteins, it binds directly to 16S rRNA where it nucleates assembly of the head domain of the 30S subunit. Is located at the subunit interface close to the decoding center, probably blocks exit of the E-site tRNA. The polypeptide is Small ribosomal subunit protein uS7 (Geobacter sulfurreducens (strain ATCC 51573 / DSM 12127 / PCA)).